A 92-amino-acid chain; its full sequence is Small ribosomal subunit protein uS19 (92 aa).

Belongs to the universal ribosomal protein uS19 family.

Its function is as follows. Protein S19 forms a complex with S13 that binds strongly to the 16S ribosomal RNA. The chain is Small ribosomal subunit protein uS19 from Photobacterium profundum (strain SS9).